A 436-amino-acid polypeptide reads, in one-letter code: Putative F-box/FBD/LRR-repeat protein At5g44960 (436 aa).

Residues 4 to 50 (CDYINELPDSLLTQILLDLRTKDSVKTSVSSKRWRNLWLNVPGLDLF) form the F-box domain. LRR repeat units follow at residues 287–310 (ISSVRHMIISGSILEELHSYSKLG) and 397–420 (SAVLKKLTLRFSFFSSIESESYKK). The 53-residue stretch at 355–407 (EENIDFHEVPQCLISTLEYVHINKLMMMEQSGIKLVNYFIENSAVLKKLTLRF) folds into the FBD domain.

The protein is Putative F-box/FBD/LRR-repeat protein At5g44960 of Arabidopsis thaliana (Mouse-ear cress).